Reading from the N-terminus, the 117-residue chain is Large ribosomal subunit protein bL20 (117 aa).

Belongs to the bacterial ribosomal protein bL20 family.

In terms of biological role, binds directly to 23S ribosomal RNA and is necessary for the in vitro assembly process of the 50S ribosomal subunit. It is not involved in the protein synthesizing functions of that subunit. The polypeptide is Large ribosomal subunit protein bL20 (Gloeothece citriformis (strain PCC 7424) (Cyanothece sp. (strain PCC 7424))).